A 1071-amino-acid chain; its full sequence is ATP-dependent helicase/deoxyribonuclease subunit B (1071 aa).

This sequence belongs to the helicase family. AddB/RexB type 2 subfamily. In terms of assembly, heterodimer of AddA and RexB. Mg(2+) serves as cofactor.

Functionally, the heterodimer acts as both an ATP-dependent DNA helicase and an ATP-dependent, dual-direction single-stranded exonuclease. Recognizes the chi site generating a DNA molecule suitable for the initiation of homologous recombination. This subunit has 5' -&gt; 3' nuclease activity but not helicase activity. The polypeptide is ATP-dependent helicase/deoxyribonuclease subunit B (Streptococcus pyogenes serotype M1).